The sequence spans 320 residues: Formimidoylglutamase (320 aa).

Mn(2+) is bound by residues H125, D153, H155, D157, D244, and D246.

The protein belongs to the arginase family. Mn(2+) is required as a cofactor.

The catalysed reaction is N-formimidoyl-L-glutamate + H2O = formamide + L-glutamate. The protein operates within amino-acid degradation; L-histidine degradation into L-glutamate; L-glutamate from N-formimidoyl-L-glutamate (hydrolase route): step 1/1. Functionally, catalyzes the conversion of N-formimidoyl-L-glutamate to L-glutamate and formamide. The protein is Formimidoylglutamase of Rhodococcus opacus (strain B4).